Here is a 538-residue protein sequence, read N- to C-terminus: Interleukin-21 receptor (538 aa).

The signal sequence occupies residues 1–19 (MPRGWAAPLLLLLLQGGWG). Cystine bridges form between Cys-20-Cys-109, Cys-25-Cys-35, and Cys-65-Cys-81. Topologically, residues 20–232 (CPDLVCYTDY…FQTQSEELKE (213 aa)) are extracellular. Fibronectin type-III domains are found at residues 21-118 (PDLV…AESI) and 119-228 (KPAP…TQSE). Asn-73, Asn-97, Asn-104, Asn-125, and Asn-135 each carry an N-linked (GlcNAc...) asparagine glycan. A glycan (C-linked (Man) tryptophan) is linked at Trp-214. The WSXWS motif motif lies at 214–218 (WSEWS). Residues 233 to 253 (GWNPHLLLLLLLVIVFIPAFW) traverse the membrane as a helical segment. At 254–538 (SLKTHPLWRL…PLSSPGPQAS (285 aa)) the chain is on the cytoplasmic side. The short motif at 266-274 (KIWAVPSPE) is the Box 1 motif element. 2 disordered regions span residues 342–367 (ESDG…SEER) and 457–487 (EDWA…GLDM).

It belongs to the type I cytokine receptor family. Type 4 subfamily. In terms of assembly, heterodimer with the common gamma subunit. Associates with JAK1. Post-translationally, C-mannosylated at Trp-214 in the WSXWS motif, the sugar chain makes extensive hydrogen bonds with Asn-73 sugar, and bridges the two fibronectin domains transforming the V-shaped receptor into an A-frame. As to expression, selectively expressed in lymphoid tissues. Most highly expressed in thymus and spleen.

It is found in the membrane. Its function is as follows. This is a receptor for interleukin-21. This Homo sapiens (Human) protein is Interleukin-21 receptor (IL21R).